Consider the following 110-residue polypeptide: UPF0060 membrane protein AHA_2410 (110 aa).

4 helical membrane passes run 8–28, 33–53, 63–83, and 87–107; these read GLFLVTALAEILGCYLPYLWL, SVWLLLPAGLSLMLFAWLLSL, AAYGGVYIFVAILWLWLVDGI, and LWDLVGSLVALCGMAIIMFAP.

The protein belongs to the UPF0060 family.

The protein localises to the cell inner membrane. The polypeptide is UPF0060 membrane protein AHA_2410 (Aeromonas hydrophila subsp. hydrophila (strain ATCC 7966 / DSM 30187 / BCRC 13018 / CCUG 14551 / JCM 1027 / KCTC 2358 / NCIMB 9240 / NCTC 8049)).